The following is a 532-amino-acid chain: Glutamate--cysteine ligase (532 aa).

Belongs to the glutamate--cysteine ligase type 1 family. Type 1 subfamily.

It carries out the reaction L-cysteine + L-glutamate + ATP = gamma-L-glutamyl-L-cysteine + ADP + phosphate + H(+). It functions in the pathway sulfur metabolism; glutathione biosynthesis; glutathione from L-cysteine and L-glutamate: step 1/2. In Pseudomonas fluorescens (strain Pf0-1), this protein is Glutamate--cysteine ligase.